Consider the following 539-residue polypeptide: Probable 1,4-beta-D-glucan cellobiohydrolase B (539 aa).

The N-terminal stretch at 1 to 26 (MLPSTISYRIYKNALFFAALFGAVQA) is a signal peptide. The interval 27 to 461 (QKVGTSKAEV…SNIKVGPIGS (435 aa)) is catalytic. N-linked (GlcNAc...) asparagine glycosylation occurs at N90. E238 serves as the catalytic Nucleophile. Residue E243 is the Proton donor of the active site. 2 N-linked (GlcNAc...) asparagine glycosylation sites follow: N296 and N495. The tract at residues 462-503 (TFNSGGSNPGGSTTTTKPATSTTTTKATTTATTNTTGPTGTG) is thr-rich linker. Residues 462 to 503 (TFNSGGSNPGGSTTTTKPATSTTTTKATTTATTNTTGPTGTG) show a composition bias toward low complexity. Positions 462–504 (TFNSGGSNPGGSTTTTKPATSTTTTKATTTATTNTTGPTGTGV) are disordered. One can recognise a CBM1 domain in the interval 503–539 (GVAQPWAQCGGIGYSGPTQCAAPYTCTKQNDYYSQCL). Disulfide bonds link C511–C528 and C522–C538.

The protein belongs to the glycosyl hydrolase 7 (cellulase C) family.

It localises to the secreted. It carries out the reaction Hydrolysis of (1-&gt;4)-beta-D-glucosidic linkages in cellulose and cellotetraose, releasing cellobiose from the non-reducing ends of the chains.. Its function is as follows. The biological conversion of cellulose to glucose generally requires three types of hydrolytic enzymes: (1) Endoglucanases which cut internal beta-1,4-glucosidic bonds; (2) Exocellobiohydrolases that cut the disaccharide cellobiose from the non-reducing end of the cellulose polymer chain; (3) Beta-1,4-glucosidases which hydrolyze the cellobiose and other short cello-oligosaccharides to glucose. The polypeptide is Probable 1,4-beta-D-glucan cellobiohydrolase B (cbhB) (Aspergillus clavatus (strain ATCC 1007 / CBS 513.65 / DSM 816 / NCTC 3887 / NRRL 1 / QM 1276 / 107)).